The sequence spans 370 residues: tRNA-specific 2-thiouridylase MnmA (370 aa).

Residues 9-16 (GISGGVDS) and methionine 35 each bind ATP. Residues 107–109 (NPD) form an interaction with target base in tRNA region. The Nucleophile role is filled by cysteine 112. A disulfide bond links cysteine 112 and cysteine 209. Glycine 137 is an ATP binding site. The segment at 159 to 161 (KDQ) is interaction with tRNA. The Cysteine persulfide intermediate role is filled by cysteine 209.

It belongs to the MnmA/TRMU family.

It localises to the cytoplasm. It carries out the reaction S-sulfanyl-L-cysteinyl-[protein] + uridine(34) in tRNA + AH2 + ATP = 2-thiouridine(34) in tRNA + L-cysteinyl-[protein] + A + AMP + diphosphate + H(+). Catalyzes the 2-thiolation of uridine at the wobble position (U34) of tRNA, leading to the formation of s(2)U34. The chain is tRNA-specific 2-thiouridylase MnmA from Mycoplasma pneumoniae (strain ATCC 29342 / M129 / Subtype 1) (Mycoplasmoides pneumoniae).